A 107-amino-acid chain; its full sequence is DNA polymerase delta subunit 4 (107 aa).

A PCNA-interaction protein motif (PIP box) motif is present at residues 1-16 (MGRKRFITDSYPVVKK). The interval 1–40 (MGRKRFITDSYPVVKKREGPPGHSKGELAPELGEDTQSLS) is disordered. The span at 15–28 (KKREGPPGHSKGEL) shows a compositional bias: basic and acidic residues.

The protein belongs to the DNA polymerase delta subunit 4 family. As to quaternary structure, component of the tetrameric DNA polymerase delta complex (Pol-delta4), which consists of POLD1/p125, POLD2/p50, POLD3/p66/p68 and POLD4/p12, with POLD1 bearing DNA polymerase and 3' to 5' proofreading exonuclease activities. Within this complex, directly interacts with POLD1 and POLD2. Directly interacts with PCNA, as do POLD1 and POLD3; this interaction stimulates Pol-delta4 polymerase activity. As POLD1 and POLD2, directly interacts with WRNIP1; this interaction stimulates DNA polymerase delta-mediated DNA synthesis, independently of the presence of PCNA, possibly by increasing initiation frequency. Upon genotoxic stress induced by DNA damaging agents or by replication stress, POLD4 is proteolytically degraded and Pol-delta4 is converted into a trimeric form of the complex (Pol-delta3) that has an increased proofreading activity. The DNA polymerase delta complex interacts with POLDIP2; this interaction is probably mediated through direct binding to POLD2. Ubiquitinated; undergoes 'Lys-48'-linked polyubiquitination in response to UV irradiation or treatment with an alkylating agent, leading to proteasomal degradation. This modification is mediated, at least in part, by RNF8. Post-translationally, ubiquitinated; undergoes 'Lys-48'-linked ubiquitination in response to UV irradiation, leading to proteasomal degradation. This modification is partly mediated by RNF8 and by the DCX(DTL) E3 ubiquitin ligase complex (also called CRL4(CDT2)). Efficient degradation requires the presence of PCNA and is required for the inhibition of fork progression after DNA damage.

The protein resides in the nucleus. Its function is as follows. As a component of the tetrameric DNA polymerase delta complex (Pol-delta4), plays a role in high fidelity genome replication and repair. Within this complex, increases the rate of DNA synthesis and decreases fidelity by regulating POLD1 polymerase and proofreading 3' to 5' exonuclease activity. Pol-delta4 participates in Okazaki fragment processing, through both the short flap pathway, as well as a nick translation system. Under conditions of DNA replication stress, required for the repair of broken replication forks through break-induced replication (BIR), a mechanism that may induce segmental genomic duplications of up to 200 kb. Involved in Pol-delta4 translesion synthesis (TLS) of templates carrying O6-methylguanine or abasic sites. Its degradation in response to DNA damage is required for the inhibition of fork progression and cell survival. The chain is DNA polymerase delta subunit 4 (Pold4) from Mus musculus (Mouse).